The primary structure comprises 478 residues: MASAMAGAGPAPGLPVAGGPVVPGPGVGIPGKSGEERLKEMEAEMALFEQEVLGAPVTGIPTAVPAVPTVEAMQVPPAPVIRPIIATNTYQQVQQTLEARAAAAATVVPPMVGGPPFVGPVGFGPADRSHLDSPEAREAMFLRRAAVAPQRAPILRPAFVPHVLQRADSALSSAAGGPRPMALRPPHQALVGPPLPGPPGPPMMLPPMARAPGPPLGSMAALRPPLEEPAAPRDLGLGLGLGLKEKEEAVVAAAAGLEEASAAVAVGAGGAPAGPAVIGPSLPLALAMPLPEPEPLPLPLEVVRGLLPPLRIPELLSLRPRPRPPRPEPPPGLMALEVPEPLGEDKKKGKPEKLKRCIRTAAGSSWEDPSLLEWDADDFRIFCGDLGNEVNDDILARAFSRFPSFLKAKVIRDKRTGKTKGYGFVSFKDPSDYVRAMREMNGKYVGSRPIKLRKSMWKDRNLDVVRKKQKEKKKLGLR.

Positions 1-20 (MASAMAGAGPAPGLPVAGGP) are enriched in low complexity. The interval 1–33 (MASAMAGAGPAPGLPVAGGPVVPGPGVGIPGKS) is disordered. An N-acetylalanine modification is found at alanine 2. At serine 133 the chain carries Phosphoserine. 4 positions are modified to asymmetric dimethylarginine: arginine 151, arginine 156, arginine 166, and arginine 179. 2 disordered regions span residues 171–209 (LSSA…PPMA) and 317–354 (SLRP…PEKL). Over residues 193–205 (PPLPGPPGPPMML) the composition is skewed to pro residues. The segment at 234–478 (DLGLGLGLGL…QKEKKKLGLR (245 aa)) is necessary for interaction with HNRNPK. Positions 343–354 (GEDKKKGKPEKL) are enriched in basic and acidic residues. Residues 379 to 457 (FRIFCGDLGN…RPIKLRKSMW (79 aa)) enclose the RRM domain.

Belongs to the RRM RBM42 family. As to quaternary structure, interacts with HNRNPK.

Its subcellular location is the nucleus. The protein localises to the cytoplasm. Functionally, binds (via the RRM domain) to the 3' untranslated region (UTR) of p21 mRNA. The protein is RNA-binding protein 42 (Rbm42) of Rattus norvegicus (Rat).